The primary structure comprises 43 residues: KNYGNGVYCNKHKCSVDWATFSANIANNSVAMAGLTGGNAGNK.

Cys-9 and Cys-14 are disulfide-bonded.

Its subcellular location is the secreted. Functionally, highly active against Gram-positive bacteria M.flavus strain ATCC 400, M.luteus strain CECT241, C.soprogenes strain NCTC533, L.monocytogenes strain ATCC 19111, L.inocua strain ATCC BAA-680D and S.carnosus strain LMG13564. Less active against B.cereus strain LMG13569, C.thiaminolyticum strain ATCC 15579, E.faecalis strain NCTC8176, L.lactis strain LM0230, L.casei strain ATCC 344, L.lactis strain IL1403, L.jensenii strain ATCC 25258, L.plantarum strain CECT220, L.brevis strain ATCC 8287, L.bulgaricus strain LMG13551, P.acidilactici strain ATCC 25740, P.pentosaceus strain ATCC 33316 and P.pentosaceus strain LMG13560. Weakly active against L.mesenteroides strain ATCC 19254, L.lactis strain ATCC 1454, L.sakei strain CECT906T, L.lactis subsp. cremoris strain MC1363 and L.curvatus strain ATCC 51436. Not active against Gram-negative bacterium S.enteritidis strain ATCC 13076. The mode of action appears to be non-lytic. Inactivated by proteinase K, but insensitive to trypsin, alpha-chymotrypsin, pepsin and papain. In Weissella paramesenteroides (Leuconostoc paramesenteroides), this protein is Bacteriocin weissellin-A.